Reading from the N-terminus, the 312-residue chain is Pyrimidine-specific ribonucleoside hydrolase RihA (312 aa).

His240 is a catalytic residue.

It belongs to the IUNH family. RihA subfamily.

Functionally, hydrolyzes cytidine or uridine to ribose and cytosine or uracil, respectively. The polypeptide is Pyrimidine-specific ribonucleoside hydrolase RihA (Citrobacter koseri (strain ATCC BAA-895 / CDC 4225-83 / SGSC4696)).